A 329-amino-acid polypeptide reads, in one-letter code: DNA-directed RNA polymerase subunit alpha (329 aa).

Residues 1–231 are alpha N-terminal domain (alpha-NTD); the sequence is MQTNLLKPKT…EQLAVFAQLE (231 aa). Residues 249–329 form an alpha C-terminal domain (alpha-CTD) region; that stretch reads FDPILLRPVD…SWPPAGLDKR (81 aa).

It belongs to the RNA polymerase alpha chain family. Homodimer. The RNAP catalytic core consists of 2 alpha, 1 beta, 1 beta' and 1 omega subunit. When a sigma factor is associated with the core the holoenzyme is formed, which can initiate transcription.

The catalysed reaction is RNA(n) + a ribonucleoside 5'-triphosphate = RNA(n+1) + diphosphate. Its function is as follows. DNA-dependent RNA polymerase catalyzes the transcription of DNA into RNA using the four ribonucleoside triphosphates as substrates. This is DNA-directed RNA polymerase subunit alpha from Polaromonas sp. (strain JS666 / ATCC BAA-500).